A 115-amino-acid chain; its full sequence is MKFVLLFGVFLVTLFSYSSAEMLDDFGQADEDELLSLIEKEEARAKECTPRFYDCSHDRHSCCRSELFKDVCTCFYPEGGDNEVCTCQQPKHLKYMEKAADKAKKFGGKIKKWFG.

An N-terminal signal peptide occupies residues 1–20; sequence MKFVLLFGVFLVTLFSYSSA. The propeptide occupies 21 to 44; sequence EMLDDFGQADEDELLSLIEKEEAR. 4 cysteine pairs are disulfide-bonded: Cys48-Cys63, Cys55-Cys72, Cys62-Cys87, and Cys74-Cys85.

It belongs to the neurotoxin 19 (CSTX) family. 01 subfamily. In terms of tissue distribution, expressed by the venom gland.

Its subcellular location is the secreted. This Lycosa singoriensis (Wolf spider) protein is U3-lycotoxin-Ls1a.